The primary structure comprises 252 residues: Accessory gland protein Acp32CD (252 aa).

The first 19 residues, 1–19, serve as a signal peptide directing secretion; that stretch reads MWRMRMRLLTGYLVLLALG. The segment at 42–252 is disordered; it reads PDGEGGTGVD…GAKEDDYEEM (211 aa). Positions 44–69 are enriched in gly residues; it reads GEGGTGVDGGGGGAGGGAAGPGGGTG. Basic and acidic residues-rich tracts occupy residues 104-122, 142-153, 159-171, and 209-225; these read AIGKKESGGGSDGKSDSKD, SDSKDAKDRQDK, QEGKRTDHSHHSS, and NGARESSQENQDAKEVA.

In terms of tissue distribution, seminal fluid.

It localises to the secreted. Its function is as follows. Responsible for physiological and behavioral changes in mated female flies. This chain is Accessory gland protein Acp32CD (Acp32CD), found in Drosophila melanogaster (Fruit fly).